A 446-amino-acid polypeptide reads, in one-letter code: Dihydroorotate dehydrogenase (quinone), mitochondrial (446 aa).

Residues 1–13 constitute a mitochondrion transit peptide; sequence MHSRPLPTLGRHA. A helical membrane pass occupies residues 40–57; the sequence is AILYTAGILGGAFAGYYL. Residues 125 to 129 and S149 contribute to the FMN site; that span reads AGLDK. K129 is a binding site for substrate. 174-178 is a binding site for substrate; that stretch reads NRYGF. FMN contacts are provided by N222 and N252. Substrate is bound by residues N252 and 252 to 257; that span reads NVSSPN. The active-site Nucleophile is the S255. FMN contacts are provided by K303 and S331. Residue 332–333 participates in substrate binding; that stretch reads NT. FMN is bound by residues G357, G387, and 408 to 409; that span reads YT.

It belongs to the dihydroorotate dehydrogenase family. Type 2 subfamily. It depends on FMN as a cofactor.

The protein resides in the mitochondrion inner membrane. The catalysed reaction is (S)-dihydroorotate + a quinone = orotate + a quinol. It participates in pyrimidine metabolism; UMP biosynthesis via de novo pathway; orotate from (S)-dihydroorotate (quinone route): step 1/1. Its activity is regulated as follows. The activity is dependent of the presence of oxygen. Catalyzes the conversion of dihydroorotate to orotate with quinone as electron acceptor. This Lachancea kluyveri (strain ATCC 58438 / CBS 3082 / BCRC 21498 / NBRC 1685 / JCM 7257 / NCYC 543 / NRRL Y-12651) (Yeast) protein is Dihydroorotate dehydrogenase (quinone), mitochondrial (URA9).